A 72-amino-acid polypeptide reads, in one-letter code: UPF0154 protein BPUM_1692 (72 aa).

A helical membrane pass occupies residues 4–24 (WVVILVGVVALLAGVALGFFI).

Belongs to the UPF0154 family.

The protein localises to the cell membrane. The polypeptide is UPF0154 protein BPUM_1692 (Bacillus pumilus (strain SAFR-032)).